Here is a 236-residue protein sequence, read N- to C-terminus: UPF0502 protein Bcen2424_5610 (236 aa).

The protein belongs to the UPF0502 family.

The polypeptide is UPF0502 protein Bcen2424_5610 (Burkholderia cenocepacia (strain HI2424)).